We begin with the raw amino-acid sequence, 762 residues long: Phosphoribosylformylglycinamidine synthase subunit PurL (762 aa).

Histidine 58 is a catalytic residue. 2 residues coordinate ATP: tyrosine 61 and arginine 105. Mg(2+) is bound at residue glutamate 107. Substrate is bound by residues 108–111 (SHNH) and arginine 130. Histidine 109 (proton acceptor) is an active-site residue. Aspartate 131 contacts Mg(2+). Glutamine 255 is a substrate binding site. Mg(2+) is bound at residue aspartate 283. 327–329 (ESQ) lines the substrate pocket. ATP-binding residues include asparagine 513 and glycine 550. Asparagine 551 contributes to the Mg(2+) binding site. Substrate is bound at residue serine 553.

The protein belongs to the FGAMS family. In terms of assembly, monomer. Part of the FGAM synthase complex composed of 1 PurL, 1 PurQ and 2 PurS subunits.

It is found in the cytoplasm. It catalyses the reaction N(2)-formyl-N(1)-(5-phospho-beta-D-ribosyl)glycinamide + L-glutamine + ATP + H2O = 2-formamido-N(1)-(5-O-phospho-beta-D-ribosyl)acetamidine + L-glutamate + ADP + phosphate + H(+). It functions in the pathway purine metabolism; IMP biosynthesis via de novo pathway; 5-amino-1-(5-phospho-D-ribosyl)imidazole from N(2)-formyl-N(1)-(5-phospho-D-ribosyl)glycinamide: step 1/2. In terms of biological role, part of the phosphoribosylformylglycinamidine synthase complex involved in the purines biosynthetic pathway. Catalyzes the ATP-dependent conversion of formylglycinamide ribonucleotide (FGAR) and glutamine to yield formylglycinamidine ribonucleotide (FGAM) and glutamate. The FGAM synthase complex is composed of three subunits. PurQ produces an ammonia molecule by converting glutamine to glutamate. PurL transfers the ammonia molecule to FGAR to form FGAM in an ATP-dependent manner. PurS interacts with PurQ and PurL and is thought to assist in the transfer of the ammonia molecule from PurQ to PurL. In Corynebacterium glutamicum (strain R), this protein is Phosphoribosylformylglycinamidine synthase subunit PurL.